The sequence spans 310 residues: Tryptophan 2,3-dioxygenase (310 aa).

Residues 1-39 (MQPPGNDAPAGCPFSGARAQGTQAAHEAPHVPGDAGEQA) form a disordered region. Residues 79–83 (FIIQH), Tyr141, and Arg145 each bind substrate. Residue His268 participates in heme binding. Thr282 serves as a coordination point for substrate.

This sequence belongs to the tryptophan 2,3-dioxygenase family. Homotetramer. Heme serves as cofactor.

The enzyme catalyses L-tryptophan + O2 = N-formyl-L-kynurenine. It participates in amino-acid degradation; L-tryptophan degradation via kynurenine pathway; L-kynurenine from L-tryptophan: step 1/2. In terms of biological role, heme-dependent dioxygenase that catalyzes the oxidative cleavage of the L-tryptophan (L-Trp) pyrrole ring and converts L-tryptophan to N-formyl-L-kynurenine. Catalyzes the oxidative cleavage of the indole moiety. In Burkholderia multivorans (strain ATCC 17616 / 249), this protein is Tryptophan 2,3-dioxygenase.